The sequence spans 396 residues: Acetate kinase (396 aa).

Residue Asn-8 coordinates Mg(2+). An ATP-binding site is contributed by Lys-15. Arg-89 is a binding site for substrate. Catalysis depends on Asp-146, which acts as the Proton donor/acceptor. ATP-binding positions include 206–210 (HIGNG), 283–285 (DMR), and 331–335 (GVGEN). A Mg(2+)-binding site is contributed by Glu-383.

This sequence belongs to the acetokinase family. In terms of assembly, homodimer. The cofactor is Mg(2+). It depends on Mn(2+) as a cofactor.

Its subcellular location is the cytoplasm. It carries out the reaction acetate + ATP = acetyl phosphate + ADP. The protein operates within metabolic intermediate biosynthesis; acetyl-CoA biosynthesis; acetyl-CoA from acetate: step 1/2. Its function is as follows. Catalyzes the formation of acetyl phosphate from acetate and ATP. Can also catalyze the reverse reaction. The protein is Acetate kinase of Streptococcus pneumoniae (strain ATCC 700669 / Spain 23F-1).